A 274-amino-acid polypeptide reads, in one-letter code: 4-hydroxy-3-methylbut-2-enyl diphosphate reductase (274 aa).

Cysteine 12 contributes to the [4Fe-4S] cluster binding site. Residues histidine 36 and histidine 70 each contribute to the (2E)-4-hydroxy-3-methylbut-2-enyl diphosphate site. Histidine 36 and histidine 70 together coordinate dimethylallyl diphosphate. Histidine 36 and histidine 70 together coordinate isopentenyl diphosphate. A [4Fe-4S] cluster-binding site is contributed by cysteine 92. Histidine 120 is a (2E)-4-hydroxy-3-methylbut-2-enyl diphosphate binding site. Histidine 120 lines the dimethylallyl diphosphate pocket. Histidine 120 provides a ligand contact to isopentenyl diphosphate. Glutamate 122 (proton donor) is an active-site residue. Threonine 158 lines the (2E)-4-hydroxy-3-methylbut-2-enyl diphosphate pocket. Cysteine 186 is a [4Fe-4S] cluster binding site. Positions 214, 215, 216, and 258 each coordinate (2E)-4-hydroxy-3-methylbut-2-enyl diphosphate. Residues serine 214, serine 215, asparagine 216, and serine 258 each contribute to the dimethylallyl diphosphate site. Positions 214, 215, 216, and 258 each coordinate isopentenyl diphosphate.

The protein belongs to the IspH family. [4Fe-4S] cluster serves as cofactor.

It catalyses the reaction isopentenyl diphosphate + 2 oxidized [2Fe-2S]-[ferredoxin] + H2O = (2E)-4-hydroxy-3-methylbut-2-enyl diphosphate + 2 reduced [2Fe-2S]-[ferredoxin] + 2 H(+). The enzyme catalyses dimethylallyl diphosphate + 2 oxidized [2Fe-2S]-[ferredoxin] + H2O = (2E)-4-hydroxy-3-methylbut-2-enyl diphosphate + 2 reduced [2Fe-2S]-[ferredoxin] + 2 H(+). It functions in the pathway isoprenoid biosynthesis; dimethylallyl diphosphate biosynthesis; dimethylallyl diphosphate from (2E)-4-hydroxy-3-methylbutenyl diphosphate: step 1/1. Its pathway is isoprenoid biosynthesis; isopentenyl diphosphate biosynthesis via DXP pathway; isopentenyl diphosphate from 1-deoxy-D-xylulose 5-phosphate: step 6/6. Its function is as follows. Catalyzes the conversion of 1-hydroxy-2-methyl-2-(E)-butenyl 4-diphosphate (HMBPP) into a mixture of isopentenyl diphosphate (IPP) and dimethylallyl diphosphate (DMAPP). Acts in the terminal step of the DOXP/MEP pathway for isoprenoid precursor biosynthesis. The polypeptide is 4-hydroxy-3-methylbut-2-enyl diphosphate reductase (Helicobacter pylori (strain P12)).